The following is a 314-amino-acid chain: Ribosomal large subunit pseudouridine synthase C (314 aa).

The S4 RNA-binding domain occupies 20–94 (QRIDNFLQKK…EYKKNLLNNI (75 aa)). D143 is an active-site residue.

Belongs to the pseudouridine synthase RluA family.

The catalysed reaction is uridine(955/2504/2580) in 23S rRNA = pseudouridine(955/2504/2580) in 23S rRNA. In terms of biological role, responsible for synthesis of pseudouridine from uracil at positions 955, 2504 and 2580 in 23S ribosomal RNA. This is Ribosomal large subunit pseudouridine synthase C (rluC) from Buchnera aphidicola subsp. Schizaphis graminum (strain Sg).